A 265-amino-acid polypeptide reads, in one-letter code: UDP-N-acetylenolpyruvoylglucosamine reductase (265 aa).

Residues 15–169 (GVGGPAELWT…TRVRLKLKER (155 aa)) form the FAD-binding PCMH-type domain. The active site involves R149. The tract at residues 182-203 (DRARKGQPKRKSAGCAFKNPPG) is disordered. C196 acts as the Proton donor in catalysis.

This sequence belongs to the MurB family. It depends on FAD as a cofactor.

The protein resides in the cytoplasm. It catalyses the reaction UDP-N-acetyl-alpha-D-muramate + NADP(+) = UDP-N-acetyl-3-O-(1-carboxyvinyl)-alpha-D-glucosamine + NADPH + H(+). It participates in cell wall biogenesis; peptidoglycan biosynthesis. In terms of biological role, cell wall formation. The protein is UDP-N-acetylenolpyruvoylglucosamine reductase of Thermus thermophilus (strain ATCC BAA-163 / DSM 7039 / HB27).